A 759-amino-acid polypeptide reads, in one-letter code: Inhibitor of nuclear factor kappa-B kinase subunit alpha (759 aa).

The disordered stretch occupies residues 1-20 (MERGAERGPPPAPGGVALRG). Residues 29–316 (WEMRDRLGTG…PETNSPKCFL (288 aa)) form the Protein kinase domain. Residues 35–43 (LGTGGFGNV) and K58 each bind ATP. D158 serves as the catalytic Proton acceptor. The tract at residues 469–490 (LLRYNANLIKMKNNMVSASQQL) is leucine-zipper. Over residues 691–703 (TPAATWVPQSSSE) the composition is skewed to polar residues. Positions 691–715 (TPAATWVPQSSSEYAPHPLSSMATP) are disordered. An NEMO-binding region spans residues 753–758 (FDWSWL).

This sequence belongs to the protein kinase superfamily. Ser/Thr protein kinase family. I-kappa-B kinase subfamily.

Its subcellular location is the cytoplasm. The protein localises to the nucleus. The enzyme catalyses L-seryl-[I-kappa-B protein] + ATP = O-phospho-L-seryl-[I-kappa-B protein] + ADP + H(+). With respect to regulation, activated when phosphorylated and inactivated when dephosphorylated. Phosphorylates inhibitors of NF-kappa-B thus leading to the dissociation of the inhibitor/NF-kappa-B complex and ultimately the degradation of the inhibitor. Phosphorylates 'Ser-10' of histone H3 at NF-kappa-B-regulated promoters during inflammatory responses triggered by cytokines. The chain is Inhibitor of nuclear factor kappa-B kinase subunit alpha (CHUK) from Gallus gallus (Chicken).